Here is an 85-residue protein sequence, read N- to C-terminus: UPF0291 protein SpyM3_1470 (85 aa).

Residues 62 to 85 (TPEKLRQVQREKGLHGRSLDDPKS) are disordered.

This sequence belongs to the UPF0291 family.

The protein localises to the cytoplasm. The polypeptide is UPF0291 protein SpyM3_1470 (Streptococcus pyogenes serotype M3 (strain ATCC BAA-595 / MGAS315)).